The following is a 444-amino-acid chain: CRAL-TRIO domain-containing protein C3H8.02 (444 aa).

Phosphoserine is present on Ser-40. Thr-43 is modified (phosphothreonine). Ser-81 is modified (phosphoserine). Positions Asp-171 to Tyr-330 constitute a CRAL-TRIO domain. Position 418 is a phosphothreonine (Thr-418).

This Schizosaccharomyces pombe (strain 972 / ATCC 24843) (Fission yeast) protein is CRAL-TRIO domain-containing protein C3H8.02.